Consider the following 748-residue polypeptide: Structure-specific endonuclease subunit SLX4 (748 aa).

The tract at residues 50-102 is disordered; that stretch reads LSSDDDSISTQVKSVTAQKSPITQETTKNDTERNKDVDKSCNPVSTSQPDLGE. The span at 57 to 75 shows a compositional bias: polar residues; sequence ISTQVKSVTAQKSPITQET. Thr72 is subject to Phosphothreonine; by ATR and ATM. Over residues 76 to 88 the composition is skewed to basic and acidic residues; the sequence is TKNDTERNKDVDK. Thr113 bears the Phosphothreonine; by ATR and ATM mark. Disordered regions lie at residues 215–236 and 277–303; these read IKTQNEGNSDKPPRARNNKGEK and EKSSSSLDNQESSQQRLWTASQLPPEL. Over residues 222 to 236 the composition is skewed to basic and acidic residues; the sequence is NSDKPPRARNNKGEK. The segment covering 277 to 291 has biased composition (low complexity); sequence EKSSSSLDNQESSQQ. A Phosphoserine; by ATR and ATM modification is found at Ser289. Thr319 carries the phosphothreonine; by ATR and ATM modification. Phosphoserine; by ATR and ATM is present on residues Ser329 and Ser355.

This sequence belongs to the SLX4 family. Forms a heterodimer with SLX1. Interacts with RAD1; catalytic subunit of the RAD1-RAD10 endonuclease. Interacts with RTT107. Phosphorylated by ATR (MEC1) and ATM (TEL1) upon DNA damage. This appears to be required for the function with the RAD1-RAD10 endonuclease.

It is found in the nucleus. The protein localises to the cytoplasm. In terms of biological role, regulatory subunit that interacts with and increases the activity of different structure-specific endonucleases. Has several distinct roles in protecting genome stability by resolving diverse forms of deleterious DNA structures. Component of the SLX1-SLX4 structure-specific endonuclease that resolves DNA secondary structures generated during DNA repair and recombination. Has endonuclease activity towards branched DNA substrates, introducing single-strand cuts in duplex DNA close to junctions with ss-DNA. Has a preference for simple Y, 5'-flap and replication fork-like structures. It cleaves the strand bearing the 5'-non-homologous arm at the branch site junction and generates ligatable, nicked products from the 5'-flap or replication fork substrates. Plays a critical role in maintaining the integrity of the ribosomal DNA (rDNA) loci, where it has a role in re-starting stalled replication forks. Has Holliday junction resolvase activity in vitro. Interacts with the structure-specific RAD1-RAD10 endonuclease and promotes RAD1-RAD10-dependent 3'-non-homologous tail removal (NHTR) during repair of double-strand breaks by single-strand annealing. SLX4 also promotes recovery from DNA-alkylation-induced replisome stalling during DNA replication by facilitating the error-free mode of lesion bypass. This does not require SLX1 or RAD1-RAD10, but probably RTT107. This is Structure-specific endonuclease subunit SLX4 from Saccharomyces cerevisiae (strain YJM789) (Baker's yeast).